The primary structure comprises 512 residues: GMP synthase [glutamine-hydrolyzing] (512 aa).

Residues 7-197 enclose the Glutamine amidotransferase type-1 domain; sequence TIIVLDFGSQ…VFGVCGCSEG (191 aa). The Nucleophile role is filled by C84. Residues H171 and E173 contribute to the active site. Residues 198-387 enclose the GMPS ATP-PPase domain; sequence WNMENFIEVE…LGIPDEIVWR (190 aa). 225–231 lines the ATP pocket; the sequence is SGGVDSS.

As to quaternary structure, homodimer.

The catalysed reaction is XMP + L-glutamine + ATP + H2O = GMP + L-glutamate + AMP + diphosphate + 2 H(+). It functions in the pathway purine metabolism; GMP biosynthesis; GMP from XMP (L-Gln route): step 1/1. Catalyzes the synthesis of GMP from XMP. The polypeptide is GMP synthase [glutamine-hydrolyzing] (Bacillus anthracis).